A 211-amino-acid polypeptide reads, in one-letter code: Ribonuclease HII (211 aa).

Residues 16–205 (APVCGVDEAG…VKAALAAAAV (190 aa)) enclose the RNase H type-2 domain. A divalent metal cation is bound by residues Asp-22, Glu-23, and Asp-114.

This sequence belongs to the RNase HII family. Requires Mn(2+) as cofactor. Mg(2+) is required as a cofactor.

Its subcellular location is the cytoplasm. The catalysed reaction is Endonucleolytic cleavage to 5'-phosphomonoester.. Endonuclease that specifically degrades the RNA of RNA-DNA hybrids. The sequence is that of Ribonuclease HII (rnhB) from Caulobacter vibrioides (strain ATCC 19089 / CIP 103742 / CB 15) (Caulobacter crescentus).